We begin with the raw amino-acid sequence, 369 residues long: Secondary metabolism regulator laeA (369 aa).

The tract at residues 1–37 (MFGNGQTGQRLPAMASPPHDSYYSQSLASSRSRNNSD) is disordered. Low complexity predominate over residues 20 to 37 (DSYYSQSLASSRSRNNSD).

It belongs to the methyltransferase superfamily. LaeA methyltransferase family. As to quaternary structure, component of the heterotrimeric velvet complex composed of laeA, veA and velB; VeA acting as a bridging protein between laeA and velB. Interacts directly with veA.

Its subcellular location is the nucleus. It catalyses the reaction L-methionyl-[protein] + S-adenosyl-L-methionine = S-methyl-L-methionyl-[protein] + S-adenosyl-L-homocysteine. Methyltransferase that performs automethylation. No other methyl-accepting substrate has been identified yet. Component of the velvet transcription factor complex that acts as a global regulator for secondary metabolite gene expression. Required for aflR expression and subsequent aflatoxin production. Negatively regulates veA expression. Controls conidiophore and conidial development. Required for hydrophobin production which plays a role in cell surface hydrophobicity and host defense escape. The protein is Secondary metabolism regulator laeA of Aspergillus flavus (strain ATCC 200026 / FGSC A1120 / IAM 13836 / NRRL 3357 / JCM 12722 / SRRC 167).